The sequence spans 184 residues: Thymidine kinase (184 aa).

ATP contacts are provided by residues Gly-10 to Thr-17, His-53, and Asp-83 to Gln-86. Glu-84 functions as the Proton acceptor in the catalytic mechanism. A substrate-binding site is contributed by His-115. Residues Cys-140 and Cys-143 each coordinate Zn(2+). Residues Ile-161–Gly-164 and Tyr-169 each bind substrate. Residues Cys-173 and Cys-176 each contribute to the Zn(2+) site.

The protein belongs to the thymidine kinase family. As to quaternary structure, homotetramer.

The protein localises to the cytoplasm. The catalysed reaction is thymidine + ATP = dTMP + ADP + H(+). The chain is Thymidine kinase (tdk) from Thermotoga maritima (strain ATCC 43589 / DSM 3109 / JCM 10099 / NBRC 100826 / MSB8).